The sequence spans 623 residues: Glutathione import ATP-binding protein GsiA (623 aa).

2 ABC transporter domains span residues 15-269 (VSGL…QTLL) and 325-564 (LRSG…RKLM). ATP-binding positions include 49–56 (GESGSGKS) and 357–364 (GESGSGKS).

Belongs to the ABC transporter superfamily. Glutathione importer (TC 3.A.1.5.11) family. The complex is composed of two ATP-binding proteins (GsiA), two transmembrane proteins (GsiC and GsiD) and a solute-binding protein (GsiB).

Its subcellular location is the cell inner membrane. It catalyses the reaction glutathione(out) + ATP + H2O = glutathione(in) + ADP + phosphate + H(+). Its function is as follows. Part of the ABC transporter complex GsiABCD involved in glutathione import. Responsible for energy coupling to the transport system. The polypeptide is Glutathione import ATP-binding protein GsiA (Salmonella choleraesuis (strain SC-B67)).